The primary structure comprises 237 residues: Leucyl/phenylalanyl-tRNA--protein transferase (237 aa).

This sequence belongs to the L/F-transferase family.

The protein localises to the cytoplasm. It catalyses the reaction N-terminal L-lysyl-[protein] + L-leucyl-tRNA(Leu) = N-terminal L-leucyl-L-lysyl-[protein] + tRNA(Leu) + H(+). The catalysed reaction is N-terminal L-arginyl-[protein] + L-leucyl-tRNA(Leu) = N-terminal L-leucyl-L-arginyl-[protein] + tRNA(Leu) + H(+). It carries out the reaction L-phenylalanyl-tRNA(Phe) + an N-terminal L-alpha-aminoacyl-[protein] = an N-terminal L-phenylalanyl-L-alpha-aminoacyl-[protein] + tRNA(Phe). In terms of biological role, functions in the N-end rule pathway of protein degradation where it conjugates Leu, Phe and, less efficiently, Met from aminoacyl-tRNAs to the N-termini of proteins containing an N-terminal arginine or lysine. The protein is Leucyl/phenylalanyl-tRNA--protein transferase of Shewanella baltica (strain OS185).